Reading from the N-terminus, the 488-residue chain is Bifunctional protein HldE (488 aa).

The segment at 1–330 (MDRKSIESIF…NAVALAHSDS (330 aa)) is ribokinase. 205–208 (NRRE) contributes to the ATP binding site. Asp275 is an active-site residue. The segment at 356–488 (FTNGCFDLLH…IIERVLERYS (133 aa)) is cytidylyltransferase.

This sequence in the N-terminal section; belongs to the carbohydrate kinase PfkB family. The protein in the C-terminal section; belongs to the cytidylyltransferase family. As to quaternary structure, homodimer.

It catalyses the reaction D-glycero-beta-D-manno-heptose 7-phosphate + ATP = D-glycero-beta-D-manno-heptose 1,7-bisphosphate + ADP + H(+). The catalysed reaction is D-glycero-beta-D-manno-heptose 1-phosphate + ATP + H(+) = ADP-D-glycero-beta-D-manno-heptose + diphosphate. Its pathway is nucleotide-sugar biosynthesis; ADP-L-glycero-beta-D-manno-heptose biosynthesis; ADP-L-glycero-beta-D-manno-heptose from D-glycero-beta-D-manno-heptose 7-phosphate: step 1/4. It functions in the pathway nucleotide-sugar biosynthesis; ADP-L-glycero-beta-D-manno-heptose biosynthesis; ADP-L-glycero-beta-D-manno-heptose from D-glycero-beta-D-manno-heptose 7-phosphate: step 3/4. In terms of biological role, catalyzes the phosphorylation of D-glycero-D-manno-heptose 7-phosphate at the C-1 position to selectively form D-glycero-beta-D-manno-heptose-1,7-bisphosphate. Catalyzes the ADP transfer from ATP to D-glycero-beta-D-manno-heptose 1-phosphate, yielding ADP-D-glycero-beta-D-manno-heptose. This is Bifunctional protein HldE from Pelobacter propionicus (strain DSM 2379 / NBRC 103807 / OttBd1).